Consider the following 822-residue polypeptide: Cation/H(+) antiporter 3 (822 aa).

Transmembrane regions (helical) follow at residues 55–75 (FPHL…LHFF), 116–136 (EIVF…LMGV), 150–170 (AITI…VIFF), 190–210 (YVVI…NLLF), 224–244 (ISSA…LIFM), 274–294 (IVVL…FYII), 305–325 (AIYL…ANWC), 331–351 (MGPF…SAII), 362–382 (FLPF…LFGW), 388–408 (IILI…VPAL), 418–438 (FALS…YALA), and 447–467 (ETFT…PPIL).

Belongs to the monovalent cation:proton antiporter 2 (CPA2) transporter (TC 2.A.37) family. CHX (TC 2.A.37.4) subfamily.

Its subcellular location is the membrane. Functionally, may operate as a cation/H(+) antiporter. This is Cation/H(+) antiporter 3 (CHX3) from Arabidopsis thaliana (Mouse-ear cress).